The sequence spans 212 residues: Thymidylate kinase (212 aa).

Position 10-17 (10-17) interacts with ATP; the sequence is GLEGAGKT.

This sequence belongs to the thymidylate kinase family.

The catalysed reaction is dTMP + ATP = dTDP + ADP. Phosphorylation of dTMP to form dTDP in both de novo and salvage pathways of dTTP synthesis. The chain is Thymidylate kinase from Cronobacter sakazakii (strain ATCC BAA-894) (Enterobacter sakazakii).